A 252-amino-acid polypeptide reads, in one-letter code: Carbohydrate deacetylase (252 aa).

Mg(2+) is bound by residues histidine 59 and histidine 122.

This sequence belongs to the YdjC deacetylase family. As to quaternary structure, homodimer. It depends on Mg(2+) as a cofactor.

In terms of biological role, probably catalyzes the deacetylation of acetylated carbohydrates an important step in the degradation of oligosaccharides. The sequence is that of Carbohydrate deacetylase from Vibrio vulnificus (strain YJ016).